Here is a 289-residue protein sequence, read N- to C-terminus: Beta-lactamase Toho-2 (289 aa).

Positions 1–28 (MVTKRVQRMMSAAAACIPLLLGSPTLYA) are cleaved as a signal peptide. Residue Ser73 is the Acyl-ester intermediate of the active site. Position 235 to 237 (235 to 237 (KTG)) interacts with substrate.

It belongs to the class-A beta-lactamase family.

The catalysed reaction is a beta-lactam + H2O = a substituted beta-amino acid. Inhibited 16-fold better by the beta-lactamase inhibitor tazobactam than by clavulanic acid. In terms of biological role, hydrolyzes beta-lactam antibiotics such as penicillin G, carbenicillin, cephaloridine, cefoxitin, cefotaxime, ceftazidime, and aztreonam. Has especially increased relative hydrolysis rates for cephalothin, cephaloridine, cefotaxime and ceftizoxime. This Escherichia coli protein is Beta-lactamase Toho-2 (bla).